The following is a 392-amino-acid chain: MIMDGKFGKYGGIFVPELLIPALEELERAFLHYRDDRKFMAELEYHLREYAGKPTGLYYARNLSEKLGCRVYLKREDMLHTGAHKINNTIGQALLARYMGKTRIIAETGAGQHGIATAAAGALFGMDVDIYMGTEDVERQKLNVFRMEVSGAEVIPVDSGSRTLKDAINEAMRDWISNVDDTHYLIGSTMGPHPYPTMVKHFQSVIGREAREQILEVEGELPDTVIACVGGGSNAIGIFSAFMDDDVELIGAEGGGEGIESGNHGATLSAGSEGILHGSLSYVLQDGDGQISEAHSVSAGLDYPGVGPEHAHLMDTGRARYEPVTDTEALRGFRLLSRYEGIMPALESAHAIACLERYAEKPENRGKTVIVNLSGRGDKDMFMVAGLLGVGV.

At Lys85 the chain carries N6-(pyridoxal phosphate)lysine.

This sequence belongs to the TrpB family. In terms of assembly, tetramer of two alpha and two beta chains. It depends on pyridoxal 5'-phosphate as a cofactor.

It carries out the reaction (1S,2R)-1-C-(indol-3-yl)glycerol 3-phosphate + L-serine = D-glyceraldehyde 3-phosphate + L-tryptophan + H2O. The protein operates within amino-acid biosynthesis; L-tryptophan biosynthesis; L-tryptophan from chorismate: step 5/5. Its function is as follows. The beta subunit is responsible for the synthesis of L-tryptophan from indole and L-serine. In Methanothermobacter thermautotrophicus (strain ATCC 29096 / DSM 1053 / JCM 10044 / NBRC 100330 / Delta H) (Methanobacterium thermoautotrophicum), this protein is Tryptophan synthase beta chain 1 (trpB1).